Here is a 198-residue protein sequence, read N- to C-terminus: Na(+)-translocating NADH-quinone reductase subunit E (198 aa).

Helical transmembrane passes span 11-31, 35-55, 77-97, 110-130, 140-160, and 176-196; these read AVFV…FLAV, VSTA…SVPV, FLNF…LEMI, GIFL…SFMV, VVYG…MAGI, and LGIT…FSGV.

The protein belongs to the NqrDE/RnfAE family. As to quaternary structure, composed of six subunits; NqrA, NqrB, NqrC, NqrD, NqrE and NqrF.

The protein resides in the cell inner membrane. The enzyme catalyses a ubiquinone + n Na(+)(in) + NADH + H(+) = a ubiquinol + n Na(+)(out) + NAD(+). Functionally, NQR complex catalyzes the reduction of ubiquinone-1 to ubiquinol by two successive reactions, coupled with the transport of Na(+) ions from the cytoplasm to the periplasm. NqrA to NqrE are probably involved in the second step, the conversion of ubisemiquinone to ubiquinol. The chain is Na(+)-translocating NADH-quinone reductase subunit E from Serratia proteamaculans (strain 568).